A 384-amino-acid chain; its full sequence is N-acetylneuraminate epimerase (384 aa).

A signal peptide spans 1–24 (MNMKTLLTYATLLSVTAFSHVVYA). 7 Kelch repeats span residues 46 to 90 (KVYV…SVIG), 92 to 145 (YIYL…YSPD), 147 to 184 (RQIL…RIVD), 185 to 230 (DYMG…VIEG), 233 to 281 (VTLI…VAGA), 303 to 352 (QAFE…TTSE), and 354 to 383 (VLIV…VEVI). Glu-239 functions as the Proton acceptor in the catalytic mechanism.

Belongs to the NanM family. In terms of assembly, homodimer.

It localises to the periplasm. The catalysed reaction is N-acetyl-alpha-neuraminate = N-acetyl-beta-neuraminate. In terms of biological role, converts alpha-N-acetylneuranimic acid (Neu5Ac) to the beta-anomer, accelerating the equilibrium between the alpha- and beta-anomers. Probably facilitates sialidase-negative bacteria to compete successfully for limited amounts of extracellular Neu5Ac, which is likely taken up in the beta-anomer. In addition, the rapid removal of sialic acid from solution might be advantageous to the bacterium to damp down host responses. The polypeptide is N-acetylneuraminate epimerase (Vibrio cholerae serotype O1 (strain ATCC 39315 / El Tor Inaba N16961)).